Reading from the N-terminus, the 485-residue chain is Glutamyl-tRNA(Gln) amidotransferase subunit A (485 aa).

Active-site charge relay system residues include Lys-76 and Ser-152. Catalysis depends on Ser-176, which acts as the Acyl-ester intermediate.

Belongs to the amidase family. GatA subfamily. In terms of assembly, heterotrimer of A, B and C subunits.

It carries out the reaction L-glutamyl-tRNA(Gln) + L-glutamine + ATP + H2O = L-glutaminyl-tRNA(Gln) + L-glutamate + ADP + phosphate + H(+). Allows the formation of correctly charged Gln-tRNA(Gln) through the transamidation of misacylated Glu-tRNA(Gln) in organisms which lack glutaminyl-tRNA synthetase. The reaction takes place in the presence of glutamine and ATP through an activated gamma-phospho-Glu-tRNA(Gln). The polypeptide is Glutamyl-tRNA(Gln) amidotransferase subunit A (Dechloromonas aromatica (strain RCB)).